A 478-amino-acid polypeptide reads, in one-letter code: Septin-4 (478 aa).

The segment at 1 to 115 is disordered; that stretch reads MDRSLGWQGN…RSPWGKLDPY (115 aa). The segment covering 13-26 has biased composition (basic and acidic residues); sequence PEDRTEAGIKRFLE. Residues 95-108 show a composition bias toward low complexity; the sequence is APAPLSPSARPRSP. A phosphoserine mark is found at serine 117 and serine 118. Residues 141 to 414 form the Septin-type G domain; the sequence is KGFDFTLMVA…ENYRAQCIQS (274 aa). The G1 motif stretch occupies residues 151 to 158; that stretch reads GESGLGKS. GTP is bound by residues 151–158 and threonine 185; that span reads GESGLGKS. The tract at residues 208-211 is G3 motif; that stretch reads DTPG. The interval 289–292 is G4 motif; that stretch reads AKAD. 290 to 298 provides a ligand contact to GTP; the sequence is KADTLTPPE. Serine 325 is subject to Phosphoserine. GTP contacts are provided by glycine 348 and arginine 363. Residues 428–448 form a disordered region; that stretch reads LTRESGTDFPIPAVPPGTDPE. The residue at position 432 (serine 432) is a Phosphoserine. The residue at position 434 (threonine 434) is a Phosphothreonine. Positions 447 to 478 form a coiled coil; it reads PETEKLIREKDEELRRMQEMLHKIQKQMKENY.

Belongs to the TRAFAC class TrmE-Era-EngA-EngB-Septin-like GTPase superfamily. Septin GTPase family. Septins polymerize into heterooligomeric protein complexes that form filaments, and can associate with cellular membranes, actin filaments and microtubules. GTPase activity is required for filament formation. Interacts with SEPTIN8. In a mesenchymal cell line, interacts with SEPTIN9 isoform 2 variants HNA Trp-106 and Phe-111, but not the wild type SEPTIN9. Component of a septin core octameric complex consisting of SEPTIN12, SEPTIN7, SEPTIN6 and SEPTIN2 or SEPTIN4 in the order 12-7-6-2-2-6-7-12 or 12-7-6-4-4-6-7-12. Interacts with SEPTIN14 (via C-terminus). Interacts with DYRK1A. Interacts with SLC6A3/DAT and SNCA/alpha-synuclein. Interacts with STX1A; in the striatum. Interacts with XIAP (via BIR3 domain) following the induction of apoptosis. Interacts with AREL1 (via HECT domain); in the cytoplasm following induction of apoptosis. As to quaternary structure, part of a complex composed of SEPTIN4 isoform ARTS, XIAP and BCL2, within the complex interacts with both BCL2 (via BH3 domain) and XIAP, ARTS acts as a scaffold protein and stabilizes the complex. Interacts with XIAP (via BIR3 domain) following the induction of apoptosis. Phosphorylated by DYRK1A. In terms of processing, ubiquitinated by AREL1. In terms of tissue distribution, widely expressed in adult and fetal tissues with highest expression in adult brain (at protein level), heart, liver and adrenal gland and fetal heart, kidney, liver and lung. Expressed in presynaptic terminals of dopaminergic neurons projecting from the substantia nigra pars compacta to the striatum (at protein level). Expressed in axonal varicosities in dopaminergic nerve terminals (at protein level). Expressed in the putamen and in the adjacent cerebral cortex (at protein level). Expressed in colonic crypts (at protein level). Also expressed in colorectal cancers and malignant melanomas. Expressed in platelets. Highly expressed in the brain and heart.

It is found in the cytoplasm. The protein resides in the cell projection. The protein localises to the cilium. Its subcellular location is the flagellum. It localises to the cytoplasmic vesicle. It is found in the secretory vesicle. The protein resides in the axon. The protein localises to the dendrite. Its subcellular location is the perikaryon. It localises to the synapse. It is found in the mitochondrion. The protein resides in the nucleus. In terms of biological role, filament-forming cytoskeletal GTPase. Pro-apoptotic protein involved in LGR5-positive intestinal stem cell and Paneth cell expansion in the intestines, via its interaction with XIAP. May also play a role in the regulation of cell fate in the intestine. Positive regulator of apoptosis involved in hematopoietic stem cell homeostasis; via its interaction with XIAP. Negative regulator of repair and hair follicle regeneration in response to injury, due to inhibition of hair follicle stem cell proliferation, potentially via its interaction with XIAP. Plays an important role in male fertility and sperm motility. During spermiogenesis, essential for the establishment of the annulus (a fibrous ring structure connecting the midpiece and the principal piece of the sperm flagellum) which is a requisite for the structural and mechanical integrity of the sperm. Involved in the migration of cortical neurons and the formation of neuron leading processes during embryonic development. Required for dopaminergic metabolism in presynaptic autoreceptors; potentially via activity as a presynaptic scaffold protein. Required for the induction of cell death mediated by TGF-beta and possibly by other apoptotic stimuli. Induces apoptosis through binding and inhibition of XIAP resulting in significant reduction in XIAP levels, leading to caspase activation and cell death. Mediates the interaction between BCL2 and XIAP, thereby positively regulating the ubiquitination and degradation of BCL2 and promoting apoptosis. The sequence is that of Septin-4 from Homo sapiens (Human).